A 141-amino-acid chain; its full sequence is VLSSDDKCNVKAVWCKVAGHLEEYGAEALERMFCAYPQTKIYFPHFDLSHGSAQIRAHGKKVFAALHEAVNHIDDLPGALCRLSELHAHSLRVDPVNFKFLAQCVLVVVAIHHPGSLTPEVHASLDKFLCAVSSVLTSKYR.

The 141-residue stretch at 1 to 141 folds into the Globin domain; sequence VLSSDDKCNV…VSSVLTSKYR (141 aa). An O2-binding site is contributed by His58. Position 87 (His87) interacts with heme b.

The protein belongs to the globin family. Heterotetramer of two alpha chains and two beta chains. As to expression, red blood cells.

Involved in oxygen transport from the lung to the various peripheral tissues. Has antimicrobial activity against B.subtilis ATCC 6633. Has antioxidant activity. This Crocodylus siamensis (Siamese crocodile) protein is Hemoglobin subunit alpha.